The following is a 259-amino-acid chain: Probable ABC transporter permease protein RBE_1340 (259 aa).

A run of 5 helical transmembrane segments spans residues 25 to 45 (IFSLAAITSIIRPPLYFSLII), 49 to 69 (LFIGFYSLPVVAMTTFFSGAV), 148 to 168 (VIAAIITMPCLVLIGDVIGVM), 195 to 215 (PIDVISGLVKAGVFGFIISII), and 237 to 257 (AVVNSSILILISNYLITELFF).

The protein belongs to the MlaE permease family.

It is found in the cell inner membrane. Could be part of an ABC transporter complex. This chain is Probable ABC transporter permease protein RBE_1340, found in Rickettsia bellii (strain RML369-C).